The primary structure comprises 65 residues: Large ribosomal subunit protein bL35 (65 aa).

It belongs to the bacterial ribosomal protein bL35 family.

This chain is Large ribosomal subunit protein bL35, found in Geobacter sp. (strain M21).